The primary structure comprises 206 residues: Ras-related protein Ral-A (206 aa).

21–28 is a GTP binding site; that stretch reads GSGGVGKS. Residues 43–51 carry the Effector region motif; that stretch reads YEPTKADSY. Residues 68–72 and 127–130 each bind GTP; these read DTAGQ and NKSD. Position 194 is a phosphoserine (Ser194). Position 203 is a cysteine methyl ester (Cys203). Cys203 carries S-geranylgeranyl cysteine lipidation. Positions 204–206 are cleaved as a propeptide — removed in mature form; sequence CIL.

This sequence belongs to the small GTPase superfamily. Ras family. Interacts (via effector domain) with RALBP1; during mitosis, recruits RALBP1 to the mitochondrion where it promotes DNM1L phosphorylation and mitochondrial fission. Interacts with EXOC2/Sec5 and EXOC8/Exo84; binding to EXOC2 and EXOC8 is mutually exclusive. Interacts with Clostridium exoenzyme C3. Interacts with RALGPS1. Interacts with LPAR1 and LPAR2. Interacts with GRK2 in response to LPAR1 activation. RALA and GRK2 binding to LPAR1 is mutually exclusive. Interacts with CDC42. Post-translationally, prenylation is essential for membrane localization. Phosphorylated. Phosphorylation at Ser-194 by AURKA/Aurora kinase A, during mitosis, induces RALA localization to the mitochondrion where it regulates mitochondrial fission.

The protein localises to the cell membrane. It localises to the cleavage furrow. It is found in the midbody. Its subcellular location is the midbody ring. The protein resides in the mitochondrion. The enzyme catalyses GTP + H2O = GDP + phosphate + H(+). Its activity is regulated as follows. Alternates between an inactive form bound to GDP and an active form bound to GTP. Activated by a guanine nucleotide-exchange factor (GEF) and inactivated by a GTPase-activating protein (GAP). In terms of biological role, multifunctional GTPase involved in a variety of cellular processes including gene expression, cell migration, cell proliferation, oncogenic transformation and membrane trafficking. Accomplishes its multiple functions by interacting with distinct downstream effectors. Acts as a GTP sensor for GTP-dependent exocytosis of dense core vesicles. Key regulator of LPAR1 signaling and competes with GRK2 for binding to LPAR1 thus affecting the signaling properties of the receptor. Required for anchorage-independent proliferation of transformed cells. The RALA-exocyst complex regulates integrin-dependent membrane raft exocytosis and growth signaling. During mitosis, supports the stabilization and elongation of the intracellular bridge between dividing cells. Cooperates with EXOC2 to recruit other components of the exocyst to the early midbody. During mitosis, also controls mitochondrial fission by recruiting to the mitochondrion RALBP1, which mediates the phosphorylation and activation of DNM1L by the mitotic kinase cyclin B-CDK1. This is Ras-related protein Ral-A (Rala) from Mus musculus (Mouse).